The chain runs to 357 residues: Cyclic AMP-responsive element-binding protein 5 (357 aa).

The segment at 114–239 (RQDQTPHHHL…FLERNRAAAT (126 aa)) is disordered. Basic residues-rich tracts occupy residues 120–129 (HHHLHSHPHQ) and 138–175 (PYPHQHQHPAHHPHPQPHHQQNHPHHHSHSHLHAHPAH). Residues 186 to 195 (TGNQAQVSPA) are compositionally biased toward polar residues. The segment covering 196–206 (TQQMQPTQTIQ) has biased composition (low complexity). Residues 218–235 (VVDEDPDERRRKFLERNR) show a composition bias toward basic and acidic residues. Residues 224 to 287 (DERRRKFLER…AQLKQLLLTH (64 aa)) enclose the bZIP domain. The basic motif stretch occupies residues 226–246 (RRRKFLERNRAAATRCRQKRK). A leucine-zipper region spans residues 252-280 (LEKKAEELTQTNMQLQNEVSMLKNEVAQL). Residues 298 to 318 (ESQGYLSPESSPPASPVPACS) form a disordered region.

This sequence belongs to the bZIP family. Binds DNA as a homodimer or as a heterodimer with JUN or ATF2/CREBP1.

The protein localises to the nucleus. In terms of biological role, binds to the cAMP response element and activates transcription. The protein is Cyclic AMP-responsive element-binding protein 5 (Creb5) of Mus musculus (Mouse).